The following is a 378-amino-acid chain: Small ribosomal subunit protein bS1 (378 aa).

S1 motif domains are found at residues 1–66, 87–155, 172–242, 259–329, and 346–378; these read ETVT…VSRR, GMEV…LGLK, GTKL…LGLK, GDRV…LGVK, and GAIV…ASEA.

It belongs to the bacterial ribosomal protein bS1 family.

Binds mRNA; thus facilitating recognition of the initiation point. It is needed to translate mRNA with a short Shine-Dalgarno (SD) purine-rich sequence. The protein is Small ribosomal subunit protein bS1 (rpsA) of Providencia sp.